A 793-amino-acid chain; its full sequence is MLASDPRKVGVEEEFHLIDLKTRRLTTRAPELLARLPDDVYVDELQQCVVEVNSGVYADLDGLRSDLERHRRLLVDAAEDLGIGVAAAGSVPLALPAEMHVTGTQRYGRMLADYQVLAREQLICGTQVHVDLPDRDEAVQVAHRVAPHMPVLLALSASSPFRSDGADTGYASARTLLWLRWPSTGPAAPVSSAAEYGALIDDLVASGVISDPGMAYFDVRPSVKLPTLELRVCDSCPRLDTVLLVAALFRALVEREVEGLRAGRKGVEVLPTLTRAALWRAARSGLEEELVDVTVPQARPASELVGDFVNSLRPQLEETGDWDRVVELSAEATAHGSSAARQRQALGRRGRLTDVVDLLLAETAGRTEHLPDVEVPPPREPGPKSTGAGRTRRYWSARFWDRGDTADMTWTESTELDEKKLVEWRRDLHAHPELSFEERRTTGVVRDHLVGLGLEPVLMPGGTGLWCDVGPETGECIALRADLDALPVAETTGLPFESRVPGVSHACGHDAHTTMLMGAASVLTKYPPPTRVRLVFQPAEETTPGGAVDTIAAGALDGVSKIFALHCDPHLEVGKLSTRTGPITSSNDSVTVRLWSAGGHTARPHLTGDLIHATAVLVTGLASVLDRRIDARTATVLTWGKVAAGQVANSVPESGELVGTLRSASRETWASLEPLVTDAICHLLAPYNVRYELSYLRGVPPVVNDPDCTADLREAIESVVGFDHLAEAHQSSGGEDFAWYLEKVPGAMARLGVWDGTGTRQELHQPGFNLDERAMIHGVRTLVALTRLEDQSG.

Residues Met-1–Asp-407 form a carboxylate-amine ligase region. Positions Thr-367 to Arg-390 are disordered. Positions Met-408–Gly-793 are peptidase M20.

It in the C-terminal section; belongs to the glutamate--cysteine ligase type 2 family. YbdK subfamily.

It carries out the reaction L-cysteine + L-glutamate + ATP = gamma-L-glutamyl-L-cysteine + ADP + phosphate + H(+). Its function is as follows. ATP-dependent carboxylate-amine ligase which exhibits weak glutamate--cysteine ligase activity. The protein is Putative glutamate--cysteine ligase 2-3 of Rhodococcus jostii (strain RHA1).